Consider the following 137-residue polypeptide: Fructose-bisphosphate aldolase C (137 aa).

The active-site Schiff-base intermediate with dihydroxyacetone-P is lysine 3.

The protein belongs to the class I fructose-bisphosphate aldolase family. Homotetramer.

The catalysed reaction is beta-D-fructose 1,6-bisphosphate = D-glyceraldehyde 3-phosphate + dihydroxyacetone phosphate. It functions in the pathway carbohydrate degradation; glycolysis; D-glyceraldehyde 3-phosphate and glycerone phosphate from D-glucose: step 4/4. The chain is Fructose-bisphosphate aldolase C (ALDOC) from Gallus gallus (Chicken).